The primary structure comprises 443 residues: Serine/threonine-protein kinase 40 (443 aa).

Over residues 1 to 11 the composition is skewed to basic and acidic residues; sequence MKRRASERDAG. The segment at 1 to 26 is disordered; sequence MKRRASERDAGETSARSKALCSSISG. Positions 14-26 are enriched in polar residues; it reads SARSKALCSSISG. Positions 35–332 constitute a Protein kinase domain; sequence FILGPRLGNS…EVLESLGAII (298 aa). Residues 41–49 and Lys-66 each bind ATP; that span reads LGNSPVPSI. Asp-197 functions as the Proton acceptor in the catalytic mechanism.

It belongs to the protein kinase superfamily. CAMK Ser/Thr protein kinase family.

Its subcellular location is the nucleus. The protein resides in the cytoplasm. It catalyses the reaction L-seryl-[protein] + ATP = O-phospho-L-seryl-[protein] + ADP + H(+). It carries out the reaction L-threonyl-[protein] + ATP = O-phospho-L-threonyl-[protein] + ADP + H(+). In terms of biological role, may be a negative regulator of NF-kappa-B and p53-mediated gene transcription. The chain is Serine/threonine-protein kinase 40 (stk40) from Xenopus tropicalis (Western clawed frog).